Consider the following 386-residue polypeptide: Succinate--CoA ligase [ADP-forming] subunit beta (386 aa).

ATP is bound by residues Lys-46, 53–55 (GRG), Glu-99, Ala-102, and Glu-107. Asn-199 and Asp-213 together coordinate Mg(2+). Residues Asn-264 and 321–323 (GIV) contribute to the substrate site.

The protein belongs to the succinate/malate CoA ligase beta subunit family. In terms of assembly, heterotetramer of two alpha and two beta subunits. Mg(2+) is required as a cofactor.

The enzyme catalyses succinate + ATP + CoA = succinyl-CoA + ADP + phosphate. It catalyses the reaction GTP + succinate + CoA = succinyl-CoA + GDP + phosphate. Its pathway is carbohydrate metabolism; tricarboxylic acid cycle; succinate from succinyl-CoA (ligase route): step 1/1. Succinyl-CoA synthetase functions in the citric acid cycle (TCA), coupling the hydrolysis of succinyl-CoA to the synthesis of either ATP or GTP and thus represents the only step of substrate-level phosphorylation in the TCA. The beta subunit provides nucleotide specificity of the enzyme and binds the substrate succinate, while the binding sites for coenzyme A and phosphate are found in the alpha subunit. The protein is Succinate--CoA ligase [ADP-forming] subunit beta of Actinobacillus succinogenes (strain ATCC 55618 / DSM 22257 / CCUG 43843 / 130Z).